A 74-amino-acid polypeptide reads, in one-letter code: MFTMKKSLLLFFFLGTISLSLCQEERNADEDDGEMTEEEKRGILDTLKHLAKTAGKGALQSLLNHASCKLSGQC.

Residues 1 to 22 (MFTMKKSLLLFFFLGTISLSLC) form the signal peptide. The propeptide occupies 23 to 40 (QEERNADEDDGEMTEEEK). Cysteine 68 and cysteine 74 are disulfide-bonded.

Belongs to the frog skin active peptide (FSAP) family. Brevinin subfamily. As to expression, expressed by the skin glands.

The protein resides in the secreted. Antimicrobial peptide. The chain is Brevinin-2Tb from Rana temporaria (European common frog).